A 76-amino-acid chain; its full sequence is Conotoxin PnMKLT1-1111 (76 aa).

The signal sequence occupies residues 1 to 22 (MKLTCMMIVAVLFLTAWTVVTA). Positions 23-50 (VPHSNKRLANLYLKARHEMKNPEASNVD) are excised as a propeptide. Intrachain disulfides connect Cys53-Cys67, Cys60-Cys71, and Cys66-Cys75.

It belongs to the conotoxin O1 superfamily. As to expression, expressed by the venom duct.

The protein localises to the secreted. The chain is Conotoxin PnMKLT1-1111 from Conus pennaceus (Feathered cone).